Consider the following 333-residue polypeptide: Ephrin-B2 (333 aa).

The signal sequence occupies residues 1-27 (MAVRRDSVWKYCWGVLMVLCRTAISKS). An Ephrin RBD domain is found at 28 to 164 (IVLEPIYWNS…TRAMKILMKV (137 aa)). Over 28 to 229 (IVLEPIYWNS…ILGSEVALFA (202 aa)) the chain is Extracellular. N-linked (GlcNAc...) asparagine glycosylation occurs at Asn-36. Cystine bridges form between Cys-62/Cys-101 and Cys-89/Cys-153. The N-linked (GlcNAc...) asparagine glycan is linked to Asn-139. Residues 165-213 (GQDASSAGSTRNKDPTRRPELEAGTNGRSSTTSPFVKPNPGSSTDGNSA) are disordered. The span at 175 to 185 (RNKDPTRRPEL) shows a compositional bias: basic and acidic residues. Residues 190-213 (NGRSSTTSPFVKPNPGSSTDGNSA) show a composition bias toward polar residues. The helical transmembrane segment at 230 to 250 (GIASGCIIFIVIIITLVVLLL) threads the bilayer. At 251-333 (KYRRRHRKHS…QSPANIYYKV (83 aa)) the chain is on the cytoplasmic side. Position 260 is a phosphoserine (Ser-260). The residue at position 274 (Thr-274) is a Phosphothreonine. Omega-N-methylarginine is present on Arg-277. A PDZ-binding motif is present at residues 331-333 (YKV).

Belongs to the ephrin family. As to quaternary structure, interacts with PDZRN3. Binds to the receptor tyrosine kinases EPHA4, EPHB4 and EPHA3. In terms of assembly, (Microbial infection) Interacts with Hendra virus and Nipah virus G protein. In terms of processing, inducible phosphorylation of tyrosine residues in the cytoplasmic domain. Lung and kidney.

It is found in the cell membrane. Its subcellular location is the cell junction. The protein resides in the adherens junction. Functionally, cell surface transmembrane ligand for Eph receptors, a family of receptor tyrosine kinases which are crucial for migration, repulsion and adhesion during neuronal, vascular and epithelial development. Binds promiscuously Eph receptors residing on adjacent cells, leading to contact-dependent bidirectional signaling into neighboring cells. The signaling pathway downstream of the receptor is referred to as forward signaling while the signaling pathway downstream of the ephrin ligand is referred to as reverse signaling. Binds to receptor tyrosine kinase including EPHA4, EPHA3 and EPHB4. Together with EPHB4 plays a central role in heart morphogenesis and angiogenesis through regulation of cell adhesion and cell migration. EPHB4-mediated forward signaling controls cellular repulsion and segregation from EFNB2-expressing cells. May play a role in constraining the orientation of longitudinally projecting axons. Its function is as follows. (Microbial infection) Acts as a receptor for Hendra virus and Nipah virus. In Homo sapiens (Human), this protein is Ephrin-B2 (EFNB2).